The chain runs to 252 residues: Clc-like protein 2 (252 aa).

4 consecutive transmembrane segments (helical) span residues 7 to 29 (YAILVLTIIAFLLTAAALCTPAW), 91 to 111 (LFHIYLISQAFAMLSLISFCV), 127 to 147 (VFLVLAAVIAFGCLIAFAVYS), and 173 to 193 (IALTGAFVYLVAIILSVVHVL).

This sequence belongs to the Clc family.

The protein resides in the membrane. The chain is Clc-like protein 2 (clc-2) from Caenorhabditis elegans.